We begin with the raw amino-acid sequence, 208 residues long: Urease accessory protein UreG (208 aa).

Residue 12-19 participates in GTP binding; that stretch reads GPVGAGKT.

Belongs to the SIMIBI class G3E GTPase family. UreG subfamily. Homodimer. UreD, UreF and UreG form a complex that acts as a GTP-hydrolysis-dependent molecular chaperone, activating the urease apoprotein by helping to assemble the nickel containing metallocenter of UreC. The UreE protein probably delivers the nickel.

It is found in the cytoplasm. Functionally, facilitates the functional incorporation of the urease nickel metallocenter. This process requires GTP hydrolysis, probably effectuated by UreG. In Rhodobacter capsulatus (Rhodopseudomonas capsulata), this protein is Urease accessory protein UreG.